Reading from the N-terminus, the 246-residue chain is MyoD family inhibitor domain-containing protein (246 aa).

Positions 1-71 (MSGAGEALAP…WGNPSDGELI (71 aa)) are disordered. The span at 33 to 43 (KCDKDNTEKDI) shows a compositional bias: basic and acidic residues. Residues 44–63 (TQATNSHFTHGEMQDQSIWG) are compositionally biased toward polar residues. The MDFI domain occupies 74–246 (QPQRLPQLQT…MECCGICFPS (173 aa)). A phosphoserine mark is found at Ser128, Ser140, and Ser143.

It belongs to the MDFI family. As to quaternary structure, interacts with HAND1; the interaction sequesters HAND1 into the nucleolus and inhibits its activity. Interacts (via C-terminus) with ZIC2. Interacts (via C-terminus) with AXIN1, the histidine-rich region of CCNT1/cyclin-T and weakly with LEF1. Interacts with CCNT2. Interacts with GATA2. Interacts (via C-terminus) with Piezo channel composed of PIEZO1 or PIEZO2; the interaction prolongs Piezo channel inactivation. In terms of assembly, (Microbial infection) Interacts (via C-terminus) with HIV-1 Tat and Rev. Post-translationally, palmitoylated. Expressed in lymphatic tissues. Detected in the spleen, thymus, peripheral blood leukocytes as well as prostate, uterus and small intestine. Expressed in lymphatic endothelial cells.

The protein localises to the nucleus. It is found in the nucleolus. The protein resides in the cytoplasm. Its subcellular location is the secreted. Required to control the activity of various transcription factors through their sequestration in the cytoplasm. Retains nuclear Zic proteins ZIC1, ZIC2 and ZIC3 in the cytoplasm and inhibits their transcriptional activation. Modulates the expression from cellular promoters. Binds to the axin complex, resulting in an increase in the level of free beta-catenin. Affects axin regulation of the WNT and JNK signaling pathways. Involved in the development of lymphatic vessel valves. Required to promote lymphatic endothelial cell migration, in a process that involves down-regulation of integrin beta 1 activation and control of cell adhesion to the extracellular matrix. Regulates the activity of mechanosensitive Piezo channel. Functionally, (Microbial infection) Modulates the expression from viral promoters. Down-regulates Tat-dependent transcription of the human immunodeficiency virus type 1 (HIV-1) LTR by interacting with HIV-1 Tat and Rev and impairing their nuclear import, probably by rendering the NLS domains inaccessible to importin-beta. Also stimulates activation of human T-cell leukemia virus type I (HTLV-I) LTR. The chain is MyoD family inhibitor domain-containing protein from Homo sapiens (Human).